The sequence spans 96 residues: Maintenance of carboxysome distribution protein B (96 aa).

Basic and acidic residues predominate over residues 1-18 (MTNLEDKLSASIKTENKD). The disordered stretch occupies residues 1–96 (MTNLEDKLSA…STHPRRVWPD (96 aa)). Low complexity predominate over residues 59-74 (ARATTTKPAVSKSSKP).

In terms of assembly, monomer, associates with McdA:DNA. Interacts with shell components of the carboxysome.

It is found in the carboxysome. Its function is as follows. McdA and McdB together mediate carboxysome positioning on the nucleoid and to prevent their aggregation in the cell. Undergoes liquid-liquid phase separation at pH 7.0 in the presence of crowders polyethylene glycol or Ficoll. McdA is an ATPase that forms dynamic gradients on the nucleoid in response to adapter protein McdB, which associates with carboxysomes. The interplay between McdA gradients on the nucleoid and McdB-bound carboxysomes result in the equal spacing of Cbs along the cell length. Stimulates the ATPase activity of McdA, causing McdA to be released from DNA. In terms of biological role, incorrect positioning (aggregation) of carboxysomes results in reduced CO(2) fixation by encapsulated form 1 ribulose-1,5-bisphosphate carboxylase (RuBisCO, cbbL/cbbS), which leads to slower growth. The polypeptide is Maintenance of carboxysome distribution protein B (Halothiobacillus neapolitanus (strain ATCC 23641 / c2) (Thiobacillus neapolitanus)).